The sequence spans 226 residues: MYSISFQEDSLLPRERLAKEGVEALSNQELLAILLRTGTRQASVFEIAQKVLNNLSSLTDLKKMTLQELQSLSGIGRVKAIELQAMIELGHRIHKHETLEMESILSSQKLAKKMQQELGDKKQEHLVALYLNTQNQIIHQQTIFIGSVTRSIAEPREILHYAIKHMATSLILVHNHPSGAVAPSQNDDHVTKLVKEACELMGIVLLDHLIVSHSNYFSYREKTDLI.

The MPN domain occupies serine 103–leucine 225. Residues histidine 174, histidine 176, and aspartate 187 each coordinate Zn(2+). The JAMM motif motif lies at histidine 174–aspartate 187.

The protein belongs to the UPF0758 family.

The chain is UPF0758 protein SPT_1135 from Streptococcus pneumoniae (strain Taiwan19F-14).